Consider the following 424-residue polypeptide: Choline-phosphate cytidylyltransferase (424 aa).

The segment at 1–70 (MANPTTGKSS…RKRRRLTKEF (70 aa)) is disordered. Residues 14–24 (KLSNSSLSNLF) show a composition bias toward low complexity. Ser16 is subject to Phosphoserine. Residues 35–44 (ETEEQDNEDK) show a composition bias toward acidic residues. A compositionally biased stretch (basic and acidic residues) spans 45–55 (DESKNQDENKD). At Thr59 the chain carries Phosphothreonine. Residues 111–119 (VFDLFHLGH) and Lys149 each bind CTP. Residues Lys149 and Trp178 each contribute to the substrate site. CTP is bound by residues 195 to 196 (HD), Tyr200, and 223 to 227 (RTNGV). The residue at position 346 (Ser346) is a Phosphoserine. Residues 348–424 (ATEFANEFTG…LTQKKKQSAN (77 aa)) are disordered. The segment covering 381–398 (NSNNTNTNSDSDSNTNST) has biased composition (low complexity). Ser401 is modified (phosphoserine; by CK2).

The protein belongs to the cytidylyltransferase family.

The protein localises to the membrane. The enzyme catalyses phosphocholine + CTP + H(+) = CDP-choline + diphosphate. Its pathway is phospholipid metabolism; phosphatidylcholine biosynthesis; phosphatidylcholine from phosphocholine: step 1/2. Functionally, catalyzes the key rate-limiting step in the CDP-choline pathway for phosphatidylcholine biosynthesis. In Saccharomyces cerevisiae (strain ATCC 204508 / S288c) (Baker's yeast), this protein is Choline-phosphate cytidylyltransferase (PCT1).